The chain runs to 735 residues: Serine/threonine-protein kinase BRSK2 (735 aa).

Positions 20–271 constitute a Protein kinase domain; that stretch reads YRLEKTLGKG…LEHIQKHIWY (252 aa). Residues 26–34 and lysine 49 each bind ATP; that span reads LGKGQTGLV. Aspartate 142 (proton acceptor) is an active-site residue. Threonine 175 is modified (phosphothreonine; by LKB1). A Phosphothreonine; by PKA modification is found at threonine 261. Serine 295 is subject to Phosphoserine. Positions 298 to 340 constitute a UBA domain; sequence DIDPDVLDSMHSLGCFRDRNKLLQDLLSEEENQEKMIYFLLLD. Positions 346-367 are enriched in basic and acidic residues; sequence PSHEDEDLPPRNEIDPPRKRVD. Disordered stretches follow at residues 346 to 476 and 492 to 516; these read PSHE…GVPW and RFHR…SSPE. 6 positions are modified to phosphoserine: serine 368, serine 383, serine 394, serine 413, serine 424, and serine 428. Positions 411–429 are enriched in low complexity; sequence SRSISGASSGLSTSPLSSP. Pro residues predominate over residues 432-446; it reads TPHPSPRGSPLPTPK. Position 456 is a phosphoserine (serine 456). Phosphothreonine is present on residues threonine 460, threonine 464, and threonine 510. 3 positions are modified to phosphoserine: serine 513, serine 514, and serine 521. Residues 604–606 carry the KEN box motif; sequence KEN. A disordered region spans residues 682–735; it reads KNGQAAQAPSTPAKRSAHGPLGDSAAAGPGGDTEYPMGKDMAKMGPPAARREQP.

Belongs to the protein kinase superfamily. CAMK Ser/Thr protein kinase family. SNF1 subfamily. Interacts with FZR1, a regulatory subunit of the APC ubiquitin ligase complex. Interacts with COPS5. Interacts with PAK1. Mg(2+) is required as a cofactor. In terms of processing, may be phosphorylated at Thr-261 by PKA. Phosphorylated at Thr-175 by STK11/LKB1 in complex with STE20-related adapter-alpha (STRADA) pseudo kinase and CAB39. Not phosphorylated at Thr-175 by CaMKK2. In contrast, it is phosphorylated and activated by CaMKK1. May be inactivated via dephosphorylation of Thr-175 by PP2C. Post-translationally, polyubiquitinated by the APC complex in conjunction with FZR1, leading to its proteasomal degradation. Targeted for proteasomal degradation by interaction with COPS5. BRSK2 levels change during the cell cycle. BRSK2 levels are low at the G1/S boundary and gradually increase as cells progress into G2 phase. BRSK2 levels decrease rapidly at the end of mitosis. Detected in pancreas islets and in brain (at protein level). Detected in brain and pancreas.

It localises to the cytoplasm. It is found in the cytoskeleton. The protein resides in the microtubule organizing center. The protein localises to the centrosome. Its subcellular location is the perinuclear region. It localises to the endoplasmic reticulum. The enzyme catalyses L-seryl-[protein] + ATP = O-phospho-L-seryl-[protein] + ADP + H(+). It catalyses the reaction L-threonyl-[protein] + ATP = O-phospho-L-threonyl-[protein] + ADP + H(+). It carries out the reaction L-seryl-[tau protein] + ATP = O-phospho-L-seryl-[tau protein] + ADP + H(+). The catalysed reaction is L-threonyl-[tau protein] + ATP = O-phospho-L-threonyl-[tau protein] + ADP + H(+). With respect to regulation, activated by phosphorylation on Thr-175 by STK11/LKB1. Functionally, serine/threonine-protein kinase that plays a key role in polarization of neurons and axonogenesis, cell cycle progress and insulin secretion. Phosphorylates CDK16, CDC25C, MAPT/TAU, PAK1 and WEE1. Following phosphorylation and activation by STK11/LKB1, acts as a key regulator of polarization of cortical neurons, probably by mediating phosphorylation of microtubule-associated proteins such as MAPT/TAU at 'Thr-504' and 'Ser-554'. Also regulates neuron polarization by mediating phosphorylation of WEE1 at 'Ser-642' in post-mitotic neurons, leading to down-regulate WEE1 activity in polarized neurons. Plays a role in the regulation of the mitotic cell cycle progress and the onset of mitosis. Plays a role in the regulation of insulin secretion in response to elevated glucose levels, probably via phosphorylation of CDK16 and PAK1. While BRSK2 phosphorylated at Thr-175 can inhibit insulin secretion, BRSK2 phosphorylated at Thr-261 can promote insulin secretion. Regulates reorganization of the actin cytoskeleton. May play a role in the apoptotic response triggered by endoplasmic reticulum (ER) stress. This chain is Serine/threonine-protein kinase BRSK2 (Brsk2), found in Mus musculus (Mouse).